The chain runs to 953 residues: Zinc finger protein 507 (953 aa).

S95 bears the Phosphoserine mark. 3 consecutive C2H2-type zinc fingers follow at residues 125–147 (YQCS…IKQH), 155–185 (LMCS…ANIH), and 248–270 (YRCL…AWKH). S427 carries the phosphoserine modification. The interval 470–489 (KGLATDENAPPGRRRTNSES) is disordered. 5 consecutive C2H2-type zinc fingers follow at residues 641-663 (YRCR…LRVH), 669-691 (YQCP…MIHH), 697-720 (YQCK…REQH), 758-780 (YRCD…RRIH), and 786-808 (YRCS…MWKH). The interval 831–891 (GRVLGKTPGK…KLSPTSNTSY (61 aa)) is disordered. Residues 854–891 (TGSSENAVSSSELMSQTPSEVLGTNENEKLSPTSNTSY) show a composition bias toward polar residues. The segment at 911–933 (FCCCICGFESTSKENLLDHMKEH) adopts a C2H2-type 9 zinc-finger fold.

It belongs to the krueppel C2H2-type zinc-finger protein family.

The protein resides in the nucleus. May be involved in transcriptional regulation. The polypeptide is Zinc finger protein 507 (ZNF507) (Pongo abelii (Sumatran orangutan)).